We begin with the raw amino-acid sequence, 285 residues long: Nucleotide-binding protein PFLU_0879 (285 aa).

Residue 8–15 participates in ATP binding; sequence GRSGSGKS. 60-63 contributes to the GTP binding site; it reads DARN.

The protein belongs to the RapZ-like family.

Functionally, displays ATPase and GTPase activities. This is Nucleotide-binding protein PFLU_0879 from Pseudomonas fluorescens (strain SBW25).